Here is a 556-residue protein sequence, read N- to C-terminus: Potassium-transporting ATPase potassium-binding subunit (556 aa).

10 helical membrane passes run 1–21 (MTWI…GIAQ), 60–80 (SYAR…YALQ), 130–150 (GLCV…VALI), 173–193 (LRIL…GGAV), 245–265 (PQPW…FSLP), 281–301 (ILAA…AAEF), 374–394 (GLYG…LLVG), 416–436 (ILVM…VPGL), 482–502 (AALG…ILAL), and 529–549 (LIVF…LTLG).

Belongs to the KdpA family. As to quaternary structure, the system is composed of three essential subunits: KdpA, KdpB and KdpC.

It localises to the cell membrane. Its function is as follows. Part of the high-affinity ATP-driven potassium transport (or Kdp) system, which catalyzes the hydrolysis of ATP coupled with the electrogenic transport of potassium into the cytoplasm. This subunit binds the extracellular potassium ions and delivers the ions to the membrane domain of KdpB through an intramembrane tunnel. The polypeptide is Potassium-transporting ATPase potassium-binding subunit (Cutibacterium acnes (strain DSM 16379 / KPA171202) (Propionibacterium acnes)).